Here is a 416-residue protein sequence, read N- to C-terminus: MNMALISLAIDYKKSPIEVRSEFALSGLDVSMLYRSILAIDNVVHAVILSTCNRTEVYLEISNLRVVDDILVWWQGYVRNPNYKIKDYFKLRQGTEVIMHLMKLACGLESMVLGEPQILGQVKDSYTLSKKNHAIGKELDRVFQKVFATAKRVRSETRIGYCPVSVAFSAITLAKRQLDNISSKNVLIIGAGQTGELLFRHVTALAPKQIMLANRTIEKAQKITSVFRNASAHYLSELPQLIKKADIIIAAVNVLEYIVTCKYVGDKPRVFIDISIPQALDPKLGELEQNVYYCVDDINAVIEDNKDKRKYESSKAQKIIVKSLEEYLEKEKAIISNSAIKELFQKADGLVDLSLEKSLAKIRNGKDAEEIIKRFAYEIKKKVLHYPVVGMKEASKQGRSDCLVCMKRMFGLNVEK.

Residues 51-54 (TCNR), Ser110, 115-117 (EPQ), and Gln121 contribute to the substrate site. Cys52 (nucleophile) is an active-site residue. Position 190 to 195 (190 to 195 (GAGQTG)) interacts with NADP(+).

The protein belongs to the glutamyl-tRNA reductase family. Homodimer.

It carries out the reaction (S)-4-amino-5-oxopentanoate + tRNA(Glu) + NADP(+) = L-glutamyl-tRNA(Glu) + NADPH + H(+). It participates in porphyrin-containing compound metabolism; protoporphyrin-IX biosynthesis; 5-aminolevulinate from L-glutamyl-tRNA(Glu): step 1/2. Catalyzes the NADPH-dependent reduction of glutamyl-tRNA(Glu) to glutamate 1-semialdehyde (GSA). The chain is Glutamyl-tRNA reductase from Francisella tularensis subsp. holarctica (strain OSU18).